The primary structure comprises 303 residues: Glycine--tRNA ligase alpha subunit (303 aa).

The protein belongs to the class-II aminoacyl-tRNA synthetase family. In terms of assembly, tetramer of two alpha and two beta subunits.

It localises to the cytoplasm. It carries out the reaction tRNA(Gly) + glycine + ATP = glycyl-tRNA(Gly) + AMP + diphosphate. This chain is Glycine--tRNA ligase alpha subunit, found in Escherichia fergusonii (strain ATCC 35469 / DSM 13698 / CCUG 18766 / IAM 14443 / JCM 21226 / LMG 7866 / NBRC 102419 / NCTC 12128 / CDC 0568-73).